The primary structure comprises 332 residues: Phosphoenolpyruvate transferase (332 aa).

A 7,8-didemethyl-8-hydroxy-5-deazariboflavin-binding site is contributed by Asp63.

It belongs to the CofD family. As to quaternary structure, homodimer. Requires Mg(2+) as cofactor.

It carries out the reaction enolpyruvoyl-2-diphospho-5'-guanosine + 7,8-didemethyl-8-hydroxy-5-deazariboflavin = dehydro coenzyme F420-0 + GMP + H(+). The protein operates within cofactor biosynthesis; coenzyme F420 biosynthesis. Its function is as follows. Catalyzes the transfer of the phosphoenolpyruvate moiety from enoylpyruvoyl-2-diphospho-5'-guanosine (EPPG) to 7,8-didemethyl-8-hydroxy-5-deazariboflavin (FO) with the formation of dehydro coenzyme F420-0 and GMP. The polypeptide is Phosphoenolpyruvate transferase (Nocardia farcinica (strain IFM 10152)).